The sequence spans 302 residues: Lactoylglutathione lyase (302 aa).

VOC domains lie at 11–153 (KLNH…LVSQ) and 166–301 (RFNH…VIEQ). Residue H14 participates in Zn(2+) binding. Substrate is bound at residue R18. E75 is a Zn(2+) binding site. N79, R99, and H103 together coordinate substrate. Positions 103 and 149 each coordinate Zn(2+). Residue E149 is the Proton donor/acceptor of the active site.

It belongs to the glyoxalase I family. As to quaternary structure, monomer. It depends on Zn(2+) as a cofactor. Cu(2+) is required as a cofactor. Ni(2+) serves as cofactor. Requires Mn(2+) as cofactor.

It carries out the reaction (R)-S-lactoylglutathione = methylglyoxal + glutathione. It functions in the pathway secondary metabolite metabolism; methylglyoxal degradation; (R)-lactate from methylglyoxal: step 1/2. Its function is as follows. Catalyzes the conversion of hemimercaptal, formed from methylglyoxal and glutathione, to S-lactoylglutathione. The polypeptide is Lactoylglutathione lyase (glo1) (Schizosaccharomyces pombe (strain 972 / ATCC 24843) (Fission yeast)).